The following is a 274-amino-acid chain: NH(3)-dependent NAD(+) synthetase (274 aa).

46-53 is a binding site for ATP; the sequence is GISGGQDS. Residue Asp-52 participates in Mg(2+) binding. Arg-140 serves as a coordination point for deamido-NAD(+). Position 160 (Thr-160) interacts with ATP. Glu-165 is a Mg(2+) binding site. Residues Lys-173 and Asp-180 each contribute to the deamido-NAD(+) site. Residues Lys-189 and Thr-211 each contribute to the ATP site. 260 to 261 contacts deamido-NAD(+); sequence HK.

It belongs to the NAD synthetase family. In terms of assembly, homodimer.

It catalyses the reaction deamido-NAD(+) + NH4(+) + ATP = AMP + diphosphate + NAD(+) + H(+). The protein operates within cofactor biosynthesis; NAD(+) biosynthesis; NAD(+) from deamido-NAD(+) (ammonia route): step 1/1. Catalyzes the ATP-dependent amidation of deamido-NAD to form NAD. Uses ammonia as a nitrogen source. This is NH(3)-dependent NAD(+) synthetase from Streptococcus gordonii (strain Challis / ATCC 35105 / BCRC 15272 / CH1 / DL1 / V288).